The sequence spans 136 residues: MTYAIIETGGKQLRVEAGRFYDIDLLSGSEGDRISINNVLLVQNDGDVHIGQPLVEGALIEGTIMKHLRGKKIIVYKMRPKKKTRKKRGHRQELTRLMIDSISLNGKVLASLEKSLVEKPESSVMEVTSETTETVT.

This sequence belongs to the bacterial ribosomal protein bL21 family. As to quaternary structure, part of the 50S ribosomal subunit. Contacts protein L20.

In terms of biological role, this protein binds to 23S rRNA in the presence of protein L20. This Trichodesmium erythraeum (strain IMS101) protein is Large ribosomal subunit protein bL21.